Reading from the N-terminus, the 452-residue chain is Plasminogen-binding protein PgbA (452 aa).

The interval 265-452 (QEAIKEPKKA…RRKALEAGKK (188 aa)) is disordered. Composition is skewed to basic and acidic residues over residues 284-310 (LEEK…DERK) and 317-373 (KAME…KEPS). The segment covering 374–391 (DGNNATQQGEKQNAPKEN) has biased composition (polar residues). Positions 392 to 452 (NAQKEENKPN…RRKALEAGKK (61 aa)) are enriched in basic and acidic residues.

The protein localises to the cell surface. Binds plasminogen, specifically, and in a concentration and lysine-dependent manner. Plasminogen is the precursor of plasmin, a serine protease that cleaves fibrin, fibronectin, laminin and vitronectin. Acquisition of plasminogen/plasmin could enable H.pylori to degrade host components. The sequence is that of Plasminogen-binding protein PgbA (pgbA) from Helicobacter pylori (strain ATCC 700392 / 26695) (Campylobacter pylori).